The chain runs to 444 residues: tRNA modification GTPase MnmE (444 aa).

(6S)-5-formyl-5,6,7,8-tetrahydrofolate contacts are provided by Arg-24, Glu-81, and Lys-121. One can recognise a TrmE-type G domain in the interval 218–368; it reads GLTVVIAGPP…LLDALVGFAR (151 aa). GTP-binding positions include 228–233, 247–253, 272–275, and 349–351; these read NAGKST, SPQAGTT, DTAG, and SAR. Ser-232 and Thr-253 together coordinate Mg(2+). Lys-444 provides a ligand contact to (6S)-5-formyl-5,6,7,8-tetrahydrofolate.

It belongs to the TRAFAC class TrmE-Era-EngA-EngB-Septin-like GTPase superfamily. TrmE GTPase family. As to quaternary structure, homodimer. Heterotetramer of two MnmE and two MnmG subunits. It depends on K(+) as a cofactor.

The protein resides in the cytoplasm. In terms of biological role, exhibits a very high intrinsic GTPase hydrolysis rate. Involved in the addition of a carboxymethylaminomethyl (cmnm) group at the wobble position (U34) of certain tRNAs, forming tRNA-cmnm(5)s(2)U34. The sequence is that of tRNA modification GTPase MnmE from Bradyrhizobium sp. (strain ORS 278).